Here is a 210-residue protein sequence, read N- to C-terminus: 3-hexulose-6-phosphate synthase (210 aa).

This sequence belongs to the HPS/KGPDC family. HPS subfamily.

It carries out the reaction D-ribulose 5-phosphate + formaldehyde = D-arabino-hex-3-ulose 6-phosphate. It participates in one-carbon metabolism; formaldehyde assimilation via RuMP pathway; D-fructose 6-phosphate from D-ribulose 5-phosphate and formaldehyde: step 1/2. Functionally, catalyzes the condensation of ribulose 5-phosphate with formaldehyde to form 3-hexulose 6-phosphate. The sequence is that of 3-hexulose-6-phosphate synthase from Staphylococcus aureus (strain NCTC 8325 / PS 47).